Here is a 292-residue protein sequence, read N- to C-terminus: Small ribosomal subunit biogenesis GTPase RsgA (292 aa).

Residues 65-223 (KTELIRPTVA…VVDTPGFSSL (159 aa)) enclose the CP-type G domain. GTP contacts are provided by residues 114–117 (NKLD) and 165–173 (GPSGVGKST). Residues Cys247, Cys252, His254, and Cys260 each contribute to the Zn(2+) site.

This sequence belongs to the TRAFAC class YlqF/YawG GTPase family. RsgA subfamily. As to quaternary structure, monomer. Associates with 30S ribosomal subunit, binds 16S rRNA. It depends on Zn(2+) as a cofactor.

It localises to the cytoplasm. In terms of biological role, one of several proteins that assist in the late maturation steps of the functional core of the 30S ribosomal subunit. Helps release RbfA from mature subunits. May play a role in the assembly of ribosomal proteins into the subunit. Circularly permuted GTPase that catalyzes slow GTP hydrolysis, GTPase activity is stimulated by the 30S ribosomal subunit. This is Small ribosomal subunit biogenesis GTPase RsgA from Alkaliphilus metalliredigens (strain QYMF).